We begin with the raw amino-acid sequence, 232 residues long: Large ribosomal subunit protein uL1 (232 aa).

Belongs to the universal ribosomal protein uL1 family. In terms of assembly, part of the 50S ribosomal subunit.

Functionally, binds directly to 23S rRNA. The L1 stalk is quite mobile in the ribosome, and is involved in E site tRNA release. Its function is as follows. Protein L1 is also a translational repressor protein, it controls the translation of the L11 operon by binding to its mRNA. The protein is Large ribosomal subunit protein uL1 of Rhizobium rhizogenes (strain K84 / ATCC BAA-868) (Agrobacterium radiobacter).